We begin with the raw amino-acid sequence, 62 residues long: Large ribosomal subunit protein bL28 (62 aa).

It belongs to the bacterial ribosomal protein bL28 family.

This Streptococcus equi subsp. equi (strain 4047) protein is Large ribosomal subunit protein bL28.